Consider the following 270-residue polypeptide: Regulatory protein RecX (270 aa).

It belongs to the RecX family.

The protein resides in the cytoplasm. In terms of biological role, modulates RecA activity. The polypeptide is Regulatory protein RecX (Bacillus cytotoxicus (strain DSM 22905 / CIP 110041 / 391-98 / NVH 391-98)).